Reading from the N-terminus, the 250-residue chain is 2,3-bisphosphoglycerate-dependent phosphoglycerate mutase (250 aa).

Substrate-binding positions include 10–17 (RHGESQWN), 23–24 (TG), R62, 89–92 (ERHY), K100, 116–117 (RR), and 185–186 (GN). The active-site Tele-phosphohistidine intermediate is the H11. E89 serves as the catalytic Proton donor/acceptor.

The protein belongs to the phosphoglycerate mutase family. BPG-dependent PGAM subfamily. In terms of assembly, homodimer.

The catalysed reaction is (2R)-2-phosphoglycerate = (2R)-3-phosphoglycerate. It functions in the pathway carbohydrate degradation; glycolysis; pyruvate from D-glyceraldehyde 3-phosphate: step 3/5. Catalyzes the interconversion of 2-phosphoglycerate and 3-phosphoglycerate. This chain is 2,3-bisphosphoglycerate-dependent phosphoglycerate mutase, found in Klebsiella pneumoniae (strain 342).